Reading from the N-terminus, the 350-residue chain is MLSGKTVKLIVFELLQFACLCIPVFVVMERFASVIRFVKSSDTAYWLVVAASVAYAASVTLFVWVPLKYFMLKTQRFSEVTNWRPVTLAYVILSTLPCFAIIIASSKVQADAAIRFDRLTELPVSLVLFSLICVDIVERIRPLRLTGKASGLDLDLEMPGPVLTHLEQVTSISGHLQANGQDGDASFRSPVSNGSLSGRWEDARTYGLPRTSSSAYLYSHSHSGPFSFLWKRDPRHDLFVSSFMFWLDTVEMVRVAGTNSVFYSGWVFPIYILAYLSLLRVVITPDSPLLALSSILSQDLPFLVVRICLLAVFGYVTPVLYILKNILASISFVYFVFMTKLKLLNRGSMF.

The next 7 membrane-spanning stretches (helical) occupy residues 9–29 (LIVF…VVME), 47–67 (LVVA…WVPL), 85–105 (PVTL…IIAS), 120–140 (TELP…VERI), 259–279 (NSVF…LSLL), 302–322 (FLVV…VLYI), and 325–345 (NILA…KLLN).

Belongs to the TMEM236 family.

It is found in the membrane. This chain is Transmembrane protein 236 (tmem236), found in Danio rerio (Zebrafish).